Reading from the N-terminus, the 212-residue chain is Shuttling pre-60S factor ECM1 (212 aa).

Disordered regions lie at residues 28–48 (KISK…EVKD) and 188–212 (SLAE…DVEE). A Phosphoserine modification is found at Ser188. The span at 191–201 (EDNTVQKTPTN) shows a compositional bias: polar residues.

It belongs to the ECM1 family. As to quaternary structure, associates with the pre-60S ribosomal particle and the nucleopore complex.

The protein resides in the nucleus. Its subcellular location is the nucleolus. The protein localises to the cytoplasm. Functionally, pre-ribosomal factor involved in 60S ribosomal protein subunit export from the nucleus. This is Shuttling pre-60S factor ECM1 (ECM1) from Saccharomyces cerevisiae (strain ATCC 204508 / S288c) (Baker's yeast).